The sequence spans 192 residues: Bifunctional protein PyrR (192 aa).

Substrate is bound by residues 49-50, Arg-90, 111-119, Arg-144, and Val-168; these read SG and DDVLFSGRT. The PRPP-binding signature appears at 107-119; that stretch reads VILVDDVLFSGRT.

The protein belongs to the purine/pyrimidine phosphoribosyltransferase family. PyrR subfamily.

It catalyses the reaction UMP + diphosphate = 5-phospho-alpha-D-ribose 1-diphosphate + uracil. Regulates the transcription of the pyrimidine nucleotide (pyr) operon in response to exogenous pyrimidines. Its function is as follows. Also displays a weak uracil phosphoribosyltransferase activity which is not physiologically significant. The polypeptide is Bifunctional protein PyrR (Corynebacterium glutamicum (strain ATCC 13032 / DSM 20300 / JCM 1318 / BCRC 11384 / CCUG 27702 / LMG 3730 / NBRC 12168 / NCIMB 10025 / NRRL B-2784 / 534)).